The sequence spans 602 residues: Elongation factor 4 (602 aa).

The region spanning Arg-7–Gln-189 is the tr-type G domain. Residues Asp-19 to Thr-24 and Asn-136 to Asp-139 contribute to the GTP site.

Belongs to the TRAFAC class translation factor GTPase superfamily. Classic translation factor GTPase family. LepA subfamily.

The protein localises to the cell inner membrane. It carries out the reaction GTP + H2O = GDP + phosphate + H(+). In terms of biological role, required for accurate and efficient protein synthesis under certain stress conditions. May act as a fidelity factor of the translation reaction, by catalyzing a one-codon backward translocation of tRNAs on improperly translocated ribosomes. Back-translocation proceeds from a post-translocation (POST) complex to a pre-translocation (PRE) complex, thus giving elongation factor G a second chance to translocate the tRNAs correctly. Binds to ribosomes in a GTP-dependent manner. The polypeptide is Elongation factor 4 (Xylella fastidiosa (strain 9a5c)).